A 197-amino-acid chain; its full sequence is Beta-crystallin A2 (197 aa).

The N-terminal arm stretch occupies residues 1–11 (MSSAPAPGSAP). Beta/gamma crystallin 'Greek key' domains follow at residues 12-52 (VCLT…KVEN) and 53-99 (GAWV…RPVL). Residues 100-105 (CANHSD) are connecting peptide. Beta/gamma crystallin 'Greek key' domains lie at 106–147 (SRVT…KVSS) and 148–196 (GAWV…RRVQ).

This sequence belongs to the beta/gamma-crystallin family. In terms of assembly, homo/heterodimer, or complexes of higher-order. The structure of beta-crystallin oligomers seems to be stabilized through interactions between the N-terminal arms.

Functionally, crystallins are the dominant structural components of the vertebrate eye lens. The chain is Beta-crystallin A2 (Cryba2) from Mus musculus (Mouse).